The chain runs to 362 residues: 3-dehydroquinate synthase (362 aa).

Residues 71 to 76 (DGEKYK), 105 to 109 (GVIGD), 129 to 130 (TT), K142, K151, and 169 to 172 (CLKT) each bind NAD(+). Zn(2+) is bound by residues E184, H247, and H264.

The protein belongs to the sugar phosphate cyclases superfamily. Dehydroquinate synthase family. Co(2+) serves as cofactor. Requires Zn(2+) as cofactor. The cofactor is NAD(+).

It localises to the cytoplasm. It catalyses the reaction 7-phospho-2-dehydro-3-deoxy-D-arabino-heptonate = 3-dehydroquinate + phosphate. Its pathway is metabolic intermediate biosynthesis; chorismate biosynthesis; chorismate from D-erythrose 4-phosphate and phosphoenolpyruvate: step 2/7. In terms of biological role, catalyzes the conversion of 3-deoxy-D-arabino-heptulosonate 7-phosphate (DAHP) to dehydroquinate (DHQ). The polypeptide is 3-dehydroquinate synthase (Citrobacter koseri (strain ATCC BAA-895 / CDC 4225-83 / SGSC4696)).